The primary structure comprises 302 residues: Ornithine carbamoyltransferase (302 aa).

Carbamoyl phosphate is bound by residues 52 to 55 (STRT), Gln79, Arg103, and 130 to 133 (HPCQ). L-ornithine is bound by residues Asn161, Asp221, and 225 to 226 (SM). Residues 261–262 (CL) and Arg289 contribute to the carbamoyl phosphate site.

The protein belongs to the aspartate/ornithine carbamoyltransferase superfamily. OTCase family.

The protein localises to the cytoplasm. The enzyme catalyses carbamoyl phosphate + L-ornithine = L-citrulline + phosphate + H(+). The protein operates within amino-acid biosynthesis; L-arginine biosynthesis; L-arginine from L-ornithine and carbamoyl phosphate: step 1/3. Functionally, reversibly catalyzes the transfer of the carbamoyl group from carbamoyl phosphate (CP) to the N(epsilon) atom of ornithine (ORN) to produce L-citrulline. The protein is Ornithine carbamoyltransferase of Methanospirillum hungatei JF-1 (strain ATCC 27890 / DSM 864 / NBRC 100397 / JF-1).